Here is a 580-residue protein sequence, read N- to C-terminus: High affinity choline transporter 1 (580 aa).

The Extracellular segment spans residues 1–6; sequence MAFHVE. Residues 7 to 27 form a helical membrane-spanning segment; that stretch reads GLIAIIVFYLLILLVGIWAAW. The Cytoplasmic portion of the chain corresponds to 28–48; that stretch reads RTKNSGSAEERSEAIIVGGRD. Residues 49–69 form a helical membrane-spanning segment; it reads IGLLVGGFTMTATWVGGGYIN. Residues 70 to 81 are Extracellular-facing; the sequence is GTAEAVYVPGYG. A helical membrane pass occupies residues 82 to 102; sequence LAWAQAPIGYSLSLILGGLFF. The Cytoplasmic segment spans residues 103–125; that stretch reads AKPMRSKGYVTMLDPFQQIYGKR. The helical transmembrane segment at 126 to 146 threads the bilayer; that stretch reads MGGLLFIPALMGEMFWAAAIF. Residues 147 to 164 lie on the Extracellular side of the membrane; the sequence is SALGATISVIIDVDMHIS. A helical membrane pass occupies residues 165–185; it reads VIISALIATLYTLVGGLYSVA. Residues 186-191 are Cytoplasmic-facing; that stretch reads YTDVVQ. Residues 192-212 form a helical membrane-spanning segment; that stretch reads LFCIFVGLWISVPFALSHPAV. Residues 213–237 are Extracellular-facing; it reads ADIGFTAVHAKYQKPWLGTVDSSEV. The helical transmembrane segment at 238–258 threads the bilayer; it reads YSWLDSFLLLMLGGIPWQAYF. Topologically, residues 259–274 are cytoplasmic; sequence QRVLSSSSATYAQVLS. A helical transmembrane segment spans residues 275-295; sequence FLAAFGCLVMAIPAILIGAIG. Over 296–317 the chain is Extracellular; sequence ASTDWNQTAYGLPDPKTTEEAD. Residue asparagine 301 is glycosylated (N-linked (GlcNAc...) asparagine). Residues 318-338 form a helical membrane-spanning segment; sequence MILPIVLQYLCPVYISFFGLG. The Cytoplasmic segment spans residues 339-376; the sequence is AVSAAVMSSADSSILSASSMFARNIYQLSFRQNASDKE. A helical membrane pass occupies residues 377-397; it reads IVWVMRITVFVFGASATAMAL. Over 398–406 the chain is Extracellular; that stretch reads LTKTVYGLW. The chain crosses the membrane as a helical span at residues 407–427; that stretch reads YLSSDLVYIVIFPQLLCVLFV. Residues 428–435 lie on the Cytoplasmic side of the membrane; that stretch reads KGTNTYGA. Residues 436–456 form a helical membrane-spanning segment; the sequence is VAGYVSGLFLRITGGEPYLYL. Over 457 to 481 the chain is Extracellular; sequence QPLIFYPGYYPDDNGIYNQKFPFKT. The helical transmembrane segment at 482–502 threads the bilayer; it reads LAMVTSFLTNICISYLAKYLF. Residues 502–580 form a mediates interaction with SEC14L1 region; sequence FESGTLPPKL…EGSGTEDNLQ (79 aa). Over 503-580 the chain is Cytoplasmic; the sequence is ESGTLPPKLD…EGSGTEDNLQ (78 aa). A Dileucine-like motif motif is present at residues 527 to 532; it reads DKTILV.

This sequence belongs to the sodium:solute symporter (SSF) (TC 2.A.21) family. As to quaternary structure, homooligomerizes at cell surface. Interacts with SEC14L1; may regulate SLC5A7. Post-translationally, phosphorylated. As to expression, expressed in putamen, spinal cord and medulla. Expressed in cholinergic neurons.

Its subcellular location is the presynaptic cell membrane. The protein resides in the cell projection. It localises to the axon. The protein localises to the early endosome membrane. It is found in the cytoplasmic vesicle. Its subcellular location is the secretory vesicle. The protein resides in the synaptic vesicle membrane. It catalyses the reaction choline(out) + n Na(+)(out) = choline(in) + n Na(+)(in). Choline uptake activity is regulated by SLC5A7/CHT1 internalization (inactive form) from the cell surface and recycling of internalized SLC5A7/CHT1 into the cell surface (active form). Activated by extracellular chloride ion. Specifically inhibited by nanomolar concentrations of hemicholinium 3. Its function is as follows. High-affinity Na(+)-coupled choline transmembrane symporter. Functions as an electrogenic, voltage-dependent transporter with variable charge/choline stoichiometry. Choline uptake and choline-induced current is also Cl(-)-dependent where Cl(-) is likely a regulatory ion rather than cotransported ion. Plays a critical role in acetylcholine (ACh) synthesis by taking up the substrate choline from the synaptic cleft into the presynaptic nerve terminals after neurotransmitter release. SLC5A7/CHT1-mediated choline high-affinity transport in cholinergic neurons is the rate-limiting step for production of ACh, thereby facilitating communication by subsequent action potentials. Localized predominantly in presynaptic terminal intracellular organelles, and translocated to the plasma membrane in active form in response to neuronal activity. This Homo sapiens (Human) protein is High affinity choline transporter 1.